Consider the following 129-residue polypeptide: Small ribosomal subunit protein uS11 (129 aa).

The protein belongs to the universal ribosomal protein uS11 family. Part of the 30S ribosomal subunit. Interacts with proteins S7 and S18. Binds to IF-3.

Functionally, located on the platform of the 30S subunit, it bridges several disparate RNA helices of the 16S rRNA. Forms part of the Shine-Dalgarno cleft in the 70S ribosome. This chain is Small ribosomal subunit protein uS11, found in Cereibacter sphaeroides (strain ATCC 17025 / ATH 2.4.3) (Rhodobacter sphaeroides).